Reading from the N-terminus, the 367-residue chain is Alanine racemase (367 aa).

Lys40 serves as the catalytic Proton acceptor; specific for D-alanine. Position 40 is an N6-(pyridoxal phosphate)lysine (Lys40). Arg136 is a substrate binding site. Tyr263 functions as the Proton acceptor; specific for L-alanine in the catalytic mechanism. Met310 is a substrate binding site.

Belongs to the alanine racemase family. It depends on pyridoxal 5'-phosphate as a cofactor.

It catalyses the reaction L-alanine = D-alanine. Its pathway is amino-acid biosynthesis; D-alanine biosynthesis; D-alanine from L-alanine: step 1/1. Its function is as follows. Catalyzes the interconversion of L-alanine and D-alanine. May also act on other amino acids. The sequence is that of Alanine racemase (alr) from Streptococcus pneumoniae (strain Hungary19A-6).